Reading from the N-terminus, the 236-residue chain is Peptidyl-prolyl cis-trans isomerase CYP21-4 (236 aa).

The chain crosses the membrane as a helical; Signal-anchor for type II membrane protein span at residues 22-42 (ISISTIIVCNLVVAVVILSLV). Residues 52–71 (SRNTIEHETRSQRFEDTNTA) form a disordered region. Residues 54-67 (NTIEHETRSQRFED) show a composition bias toward basic and acidic residues. One can recognise a PPIase cyclophilin-type domain in the interval 82-232 (FADINTSKGL…SPIGITGVVL (151 aa)). An N-linked (GlcNAc...) asparagine glycan is attached at Asn-86.

Belongs to the cyclophilin-type PPIase family. In terms of tissue distribution, ubiquitous.

The protein localises to the membrane. It catalyses the reaction [protein]-peptidylproline (omega=180) = [protein]-peptidylproline (omega=0). PPIases accelerate the folding of proteins. It catalyzes the cis-trans isomerization of proline imidic peptide bonds in oligopeptides. This Arabidopsis thaliana (Mouse-ear cress) protein is Peptidyl-prolyl cis-trans isomerase CYP21-4 (CYP21-4).